We begin with the raw amino-acid sequence, 201 residues long: UPF0301 protein MSMEG_6921/MSMEI_6732 (201 aa).

The protein belongs to the UPF0301 (AlgH) family.

The chain is UPF0301 protein MSMEG_6921/MSMEI_6732 from Mycolicibacterium smegmatis (strain ATCC 700084 / mc(2)155) (Mycobacterium smegmatis).